A 340-amino-acid polypeptide reads, in one-letter code: Anthranilate phosphoribosyltransferase (340 aa).

5-phospho-alpha-D-ribose 1-diphosphate is bound by residues glycine 82, 85-86 (GD), threonine 90, 92-95 (NISS), 110-118 (KHGGRSVSS), and alanine 122. Position 82 (glycine 82) interacts with anthranilate. Serine 94 contributes to the Mg(2+) binding site. Residue arginine 168 coordinates anthranilate. 2 residues coordinate Mg(2+): aspartate 227 and glutamate 228.

Belongs to the anthranilate phosphoribosyltransferase family. Homodimer. It depends on Mg(2+) as a cofactor.

It carries out the reaction N-(5-phospho-beta-D-ribosyl)anthranilate + diphosphate = 5-phospho-alpha-D-ribose 1-diphosphate + anthranilate. It participates in amino-acid biosynthesis; L-tryptophan biosynthesis; L-tryptophan from chorismate: step 2/5. In terms of biological role, catalyzes the transfer of the phosphoribosyl group of 5-phosphorylribose-1-pyrophosphate (PRPP) to anthranilate to yield N-(5'-phosphoribosyl)-anthranilate (PRA). In Dechloromonas aromatica (strain RCB), this protein is Anthranilate phosphoribosyltransferase.